The following is a 98-amino-acid chain: Trp operon repressor homolog (98 aa).

A DNA-binding region spans residues 59 to 82 (QRQVSQMLGVGVATITRGSNELKA).

Belongs to the TrpR family. As to quaternary structure, homodimer.

The protein resides in the cytoplasm. Its function is as follows. This protein is an aporepressor. When complexed with L-tryptophan it binds the operator region of the trp operon and prevents the initiation of transcription. In Vibrio atlanticus (strain LGP32) (Vibrio splendidus (strain Mel32)), this protein is Trp operon repressor homolog.